Consider the following 153-residue polypeptide: Bacteriohemerythrin (153 aa).

Residues H21, H57, E61, H76, H80, H115, and D120 each coordinate Fe cation.

It belongs to the hemerythrin family. As to quaternary structure, monomer.

Functionally, oxygen-binding protein. May be involved in a storage mechanism or for delivery to oxygen-requiring enzymes. The oxygen-binding site contains two iron atoms. The protein is Bacteriohemerythrin of Stenotrophomonas maltophilia (strain R551-3).